Consider the following 314-residue polypeptide: tRNA dimethylallyltransferase (314 aa).

9 to 16 (GPTAVGKT) lines the ATP pocket. 11–16 (TAVGKT) serves as a coordination point for substrate. The interval 34–37 (DSVQ) is interaction with substrate tRNA.

It belongs to the IPP transferase family. Monomer. It depends on Mg(2+) as a cofactor.

It carries out the reaction adenosine(37) in tRNA + dimethylallyl diphosphate = N(6)-dimethylallyladenosine(37) in tRNA + diphosphate. Functionally, catalyzes the transfer of a dimethylallyl group onto the adenine at position 37 in tRNAs that read codons beginning with uridine, leading to the formation of N6-(dimethylallyl)adenosine (i(6)A). This is tRNA dimethylallyltransferase from Desulfitobacterium hafniense (strain DSM 10664 / DCB-2).